The sequence spans 370 residues: MNKMNRKFSKLLKNPHIFFRDFLNKKYPIKNTELPFAESEEANLIEAHQKLDKIIQKNTLRQSDIDVVFTWVDGSDPLWQSKYHQYAPNYQANSALYATDIARFEDHNELYYSVHAVLKFMPWVRHIFIVTDNQKPKWLDEAYQEKITLISHQDIIDKEYLPTFNSHVIEAFLHKIPNLSENFIYFNDDVFIARELQAEHFFQANGIASIFMSEKSLTQMRDRGTITPTLSASEYSIRLLNKYYNTNIDSPLVHTYIPLKKSMYELAWQRYEKEILGFLPNKLRTNHDLNFANFLIPWLMYFEGKAMPKIDICYYFNIRSPNALTQYKKLLNKKNIGEQPNSFCANDFNSQKSINNYQNQLFSFLNSYYS.

The protein belongs to the stealth family.

Its function is as follows. Part of a capsular polysaccharide synthesis locus. The protein is Capsular polysaccharide phosphotransferase of Actinobacillus suis.